The following is a 153-amino-acid chain: Putative pre-16S rRNA nuclease (153 aa).

The protein belongs to the YqgF nuclease family.

Its subcellular location is the cytoplasm. Functionally, could be a nuclease involved in processing of the 5'-end of pre-16S rRNA. The polypeptide is Putative pre-16S rRNA nuclease (Prochlorococcus marinus (strain MIT 9301)).